We begin with the raw amino-acid sequence, 103 residues long: Regulator of rDNA transcription protein 1 (103 aa).

The next 2 helical transmembrane spans lie at 9–33 (FLPS…WVLV) and 40–57 (VAFI…YTFF).

It is found in the membrane. Functionally, identified in a screen for mutants with decreased levels of rDNA transcription. The chain is Regulator of rDNA transcription protein 1 (RRT1) from Saccharomyces cerevisiae (strain ATCC 204508 / S288c) (Baker's yeast).